A 534-amino-acid polypeptide reads, in one-letter code: Peptide chain release factor 3 (534 aa).

A tr-type G domain is found at 9–278; that stretch reads ARRRTFAIIS…FFVEHAPSPQ (270 aa). Residues 18-25, 86-90, and 140-143 each bind GTP; these read SHPDAGKT, DTPGH, and NKLD.

This sequence belongs to the TRAFAC class translation factor GTPase superfamily. Classic translation factor GTPase family. PrfC subfamily.

It localises to the cytoplasm. In terms of biological role, increases the formation of ribosomal termination complexes and stimulates activities of RF-1 and RF-2. It binds guanine nucleotides and has strong preference for UGA stop codons. It may interact directly with the ribosome. The stimulation of RF-1 and RF-2 is significantly reduced by GTP and GDP, but not by GMP. The polypeptide is Peptide chain release factor 3 (Xylella fastidiosa (strain M23)).